Consider the following 40-residue polypeptide: SVELDSDGEPIRNGGGLYYILPVVQGKGGGLEFAKTGSQS.

As to quaternary structure, monomer.

It carries out the reaction Preferential cleavage: Arg-|-Xaa, Lys-|-Xaa.. Its function is as follows. Inhibits trypsin but not chymotrypsin, papain or porcine pancreatic alpha-amylase. Has insecticidal activity against A.aegypti. Functions by inhibiting the A.aegypti midgut proteases to reduce the survival of larva and adults. The sequence is that of Trypsin inhibitor from Cassia leiandra (Marimari).